Consider the following 34-residue polypeptide: uncharacterized protein (34 aa).

This is an uncharacterized protein from Haemophilus influenzae (strain ATCC 51907 / DSM 11121 / KW20 / Rd).